Consider the following 88-residue polypeptide: Small ribosomal subunit protein uS15 (88 aa).

The tract at residues 1 to 23 is disordered; the sequence is MIASSVKAEVVKSNARSANDTGS. The span at 14–23 shows a compositional bias: polar residues; it reads NARSANDTGS.

It belongs to the universal ribosomal protein uS15 family. Part of the 30S ribosomal subunit. Forms a bridge to the 50S subunit in the 70S ribosome, contacting the 23S rRNA.

In terms of biological role, one of the primary rRNA binding proteins, it binds directly to 16S rRNA where it helps nucleate assembly of the platform of the 30S subunit by binding and bridging several RNA helices of the 16S rRNA. Its function is as follows. Forms an intersubunit bridge (bridge B4) with the 23S rRNA of the 50S subunit in the ribosome. The protein is Small ribosomal subunit protein uS15 of Delftia acidovorans (strain DSM 14801 / SPH-1).